The chain runs to 92 residues: Alpha-hemoglobin-stabilizing protein (92 aa).

This sequence belongs to the AHSP family. In terms of assembly, monomer. Forms a heterodimer with free alpha-hemoglobin. Does not bind beta-hemoglobin nor alpha(2)beta(2) hemoglobin A.

The protein localises to the cytoplasm. In terms of biological role, acts as a chaperone to prevent the harmful aggregation of alpha-hemoglobin during normal erythroid cell development. Specifically protects free alpha-hemoglobin from precipitation. This Bos taurus (Bovine) protein is Alpha-hemoglobin-stabilizing protein (AHSP).